The chain runs to 628 residues: NUAK family SNF1-like kinase 2 (628 aa).

At Met-1 the chain carries N-acetylmethionine. The Protein kinase domain occupies 53–303; that stretch reads YEFLETLGKG…LEDVASHWWV (251 aa). ATP is bound by residues 59 to 67 and Lys-81; that span reads LGKGTYGKV. Asp-175 acts as the Proton acceptor in catalysis. The residue at position 208 (Thr-208) is a Phosphothreonine; by LKB1. A disordered region spans residues 355–493; sequence KQHAPGGGST…KEQKPPQASG (139 aa). At Ser-435 the chain carries Phosphoserine. Positions 457–469 are enriched in low complexity; it reads SGYYSSPEPSESG. Phosphoserine is present on residues Ser-523, Ser-544, Ser-547, and Ser-573. Residues 531 to 562 form a disordered region; sequence RPLARASRPSGAVSEDSILSSESFDQLDLPER.

The protein belongs to the protein kinase superfamily. CAMK Ser/Thr protein kinase family. SNF1 subfamily. The cofactor is Mg(2+). Post-translationally, phosphorylated at Thr-208 by STK11/LKB1 in complex with STE20-related adapter-alpha (STRADA) pseudo kinase and CAB39. Autophosphorylation is also possible at Thr-208.

It carries out the reaction L-seryl-[protein] + ATP = O-phospho-L-seryl-[protein] + ADP + H(+). The catalysed reaction is L-threonyl-[protein] + ATP = O-phospho-L-threonyl-[protein] + ADP + H(+). Activated by phosphorylation on Thr-208. Its function is as follows. Stress-activated kinase involved in tolerance to glucose starvation. Induces cell-cell detachment by increasing F-actin conversion to G-actin. Expression is induced by CD95 or TNF-alpha, via NF-kappa-B. Protects cells from CD95-mediated apoptosis and is required for the increased motility and invasiveness of CD95-activated tumor cells. Phosphorylates LATS1 and LATS2. Plays a key role in neural tube closure during embryonic development through LATS2 phosphorylation and regulation of the nuclear localization of YAP1 a critical downstream regulatory target in the Hippo signaling pathway. The protein is NUAK family SNF1-like kinase 2 of Homo sapiens (Human).